The primary structure comprises 356 residues: Protein SEC13 homolog (356 aa).

WD repeat units follow at residues 11–50, 54–95, 101–142, 149–205, 210–253, and 259–298; these read EHED…KALA, GHQG…DWTK, NHDS…GVWD, AHTI…WVEE, AHSD…SEWT, and TFDD…QWIR. The interval 307–356 is disordered; it reads IQSKQPSHLPHSHSQQQQALQQHQQQAPSHPGPSSDSEHSSNLSNSQLSN. Residues 308–356 are compositionally biased toward low complexity; sequence QSKQPSHLPHSHSQQQQALQQHQQQAPSHPGPSSDSEHSSNLSNSQLSN.

The protein belongs to the WD repeat SEC13 family. As to quaternary structure, probable component of the nuclear pore complex (NPC). Component of the GATOR complex consisting of mio, Nup44A/Seh1, Im11, Nplr3, Nplr2, Wdr24, Wdr59 and Sec13. Within the GATOR complex, probable component of the GATOR2 subcomplex which is likely composed of mio, Nup44A/Seh1, Wdr24, Wdr59 and Sec13. Interacts with msk. Interacts (preferentially when phosphorylated) with Mad. The GATOR2 complex associates with unmet in the absence of S-adenosyl-L-methionine; the mio-Wdr24-Nup44A subcomplex is essential and sufficient for this interaction while Wdr59 and Sec13 are dispensable. This association acts as a nutrient sensor to inhibit mTORC1 signaling in the absence of methionine. As to expression, salivary glands.

It is found in the nucleus envelope. The protein resides in the nucleus. It localises to the nucleoplasm. Its subcellular location is the cytoplasm. The protein localises to the cytoskeleton. It is found in the microtubule organizing center. The protein resides in the centrosome. It localises to the nuclear pore complex. Its subcellular location is the cytoplasmic vesicle. The protein localises to the COPII-coated vesicle membrane. It is found in the endoplasmic reticulum membrane. The protein resides in the lysosome membrane. In terms of biological role, functions as a component of the nuclear pore complex (NPC) and the COPII coat. At the endoplasmic reticulum, SEC13 is involved in the biogenesis of COPII-coated vesicles. Recruited to transcriptionally active chromatin at the time of transcription initiation by RNA polymerase II. Required for proper expression of ecdysone-responsive genes such as Eip74EF and Eip75B during larval development. Required for reactivation of transcription after heat shock. Required for nuclear import of phosphorylated Mad via importin msk. Has no role in classical nuclear localization signal (cNLS)-dependent nuclear import via importin-beta. A component of the GATOR subcomplex GATOR2 which functions as an activator of the amino acid-sensing branch of the mTORC1 signaling pathway. The two GATOR subcomplexes, GATOR1 and GATOR2, regulate the mTORC1 pathway in order to mediate metabolic homeostasis, female gametogenesis and the response to amino acid limitation and complete starvation. GATOR2 activates the mTORC1 signaling pathway through the inhibition of the GATOR1 subcomplex, controlling the switch to cell proliferation and growth under nutrient replete conditions and during female oocyte development. In Drosophila melanogaster (Fruit fly), this protein is Protein SEC13 homolog.